The following is a 721-amino-acid chain: Polyribonucleotide nucleotidyltransferase (721 aa).

Mg(2+)-binding residues include Asp495 and Asp501. Residues 562–621 form the KH domain; that stretch reads PRLLSFRIDPELIGTVIGPGGRTIKGITERTNTKIDIEDSGIVTIASHDGAAADEAQKII. Positions 631–699 constitute an S1 motif domain; the sequence is GEVFSGAITR…NRGRINLTLR (69 aa). The interval 700-721 is disordered; sequence GVPQNGEEAEPAPAPTPVAPLN. The span at 711–721 shows a compositional bias: pro residues; that stretch reads APAPTPVAPLN.

This sequence belongs to the polyribonucleotide nucleotidyltransferase family. Requires Mg(2+) as cofactor.

It is found in the cytoplasm. The enzyme catalyses RNA(n+1) + phosphate = RNA(n) + a ribonucleoside 5'-diphosphate. Functionally, involved in mRNA degradation. Catalyzes the phosphorolysis of single-stranded polyribonucleotides processively in the 3'- to 5'-direction. This Synechococcus sp. (strain WH7803) protein is Polyribonucleotide nucleotidyltransferase.